A 701-amino-acid chain; its full sequence is Elongation factor G 1 (701 aa).

Residues Glu8 to Leu290 enclose the tr-type G domain. GTP-binding positions include Ala17–Thr24, Asp88–His92, and Asn142–Asp145.

This sequence belongs to the TRAFAC class translation factor GTPase superfamily. Classic translation factor GTPase family. EF-G/EF-2 subfamily.

It localises to the cytoplasm. Catalyzes the GTP-dependent ribosomal translocation step during translation elongation. During this step, the ribosome changes from the pre-translocational (PRE) to the post-translocational (POST) state as the newly formed A-site-bound peptidyl-tRNA and P-site-bound deacylated tRNA move to the P and E sites, respectively. Catalyzes the coordinated movement of the two tRNA molecules, the mRNA and conformational changes in the ribosome. The sequence is that of Elongation factor G 1 from Paraburkholderia xenovorans (strain LB400).